A 165-amino-acid polypeptide reads, in one-letter code: GPI-anchored protein LORELEI (165 aa).

Positions 1–20 are cleaved as a signal peptide; the sequence is MELILLFFFLMALLVSLSSS. Positions 82 to 93 are required for its function in pollen tube reception; that stretch reads PYVSQINDMNSD. An N-linked (GlcNAc...) asparagine glycan is attached at Asn-137. Ser-139 is lipidated: GPI-anchor amidated serine. The propeptide at 140–165 is removed in mature form; the sequence is TADSTPRFISLLISAATAVFALLVLT.

As to quaternary structure, interacts with FER. Expressed in leaves, buds, flowers and stems. Highest expression in the synergid cells of the female gametophyte.

It localises to the cell membrane. Functionally, female gametophyte-specific component of the signaling pathway required for fertilization. Required for reception of the pollen tube by the female gametophyte. Acts specifically at the synergid cell surface for pollen tube reception. Plays a role in double fertilization and early seed development. Component of the FER-regulated Rho GTPase signaling complex. Acts as a chaperone and coreceptor for FER. Required for localization of FER to the plasma membrane. The polypeptide is GPI-anchored protein LORELEI (LRE) (Arabidopsis thaliana (Mouse-ear cress)).